The primary structure comprises 884 residues: Probable mixed-linked glucan synthase 9 (884 aa).

Over residues 1 to 27 the composition is skewed to low complexity; that stretch reads MALSPAAAGRTGRNNNNDAGLADPLLP. Positions 1–34 are disordered; sequence MALSPAAAGRTGRNNNNDAGLADPLLPAGGGGGG. 2 consecutive transmembrane segments (helical) span residues 73-93 and 104-124; these read VLLH…VLFL and AMWL…TWLL. Aspartate 195 is an active-site residue. The substrate site is built by aspartate 396 and aspartate 398. Aspartate 565 is a catalytic residue. The next 6 membrane-spanning stretches (helical) occupy residues 640-660, 672-692, 708-728, 765-785, 802-822, and 830-850; these read TAYP…VIWL, FSTY…IGLV, EQFY…HIVL, LLAP…AAAG, AGLV…LGIM, and CALF…FVAV.

This sequence belongs to the glycosyltransferase 2 family. Plant cellulose synthase-like F subfamily.

It localises to the golgi apparatus membrane. In terms of biological role, may catalyze both beta-1,3 and beta-1,4 glycosidic linkage on beta-D-glucan. Essential for (1,3;1,4)-beta-D-glucans synthesis in grasses and cereals (Poaceae). The mixed-linked glucans (which are not present in walls of dicotyledons or most other monocotyledonous plants) are particularly important constituents of the walls of the starchy endosperm and aleurone cells of cereal grains such as oats, wheat, rice and barley. They can account for up to 70% by weight of the wall. This Oryza sativa subsp. japonica (Rice) protein is Probable mixed-linked glucan synthase 9 (CSLF9).